We begin with the raw amino-acid sequence, 231 residues long: Small ribosomal subunit protein uS3 (231 aa).

One can recognise a KH type-2 domain in the interval 39–107 (IRKHIMKAIP…DVSLNIVEIR (69 aa)).

The protein belongs to the universal ribosomal protein uS3 family. Part of the 30S ribosomal subunit. Forms a tight complex with proteins S10 and S14.

Its function is as follows. Binds the lower part of the 30S subunit head. Binds mRNA in the 70S ribosome, positioning it for translation. The polypeptide is Small ribosomal subunit protein uS3 (Rhizorhabdus wittichii (strain DSM 6014 / CCUG 31198 / JCM 15750 / NBRC 105917 / EY 4224 / RW1) (Sphingomonas wittichii)).